The following is a 765-amino-acid chain: 5-methyltetrahydropteroyltriglutamate--homocysteine methyltransferase (765 aa).

5-methyltetrahydropteroyltri-L-glutamate-binding positions include 18–21 and Lys114; that span reads REWK. Residues 437–439 and Glu490 each bind L-homocysteine; that span reads IGS. L-methionine-binding positions include 437-439 and Glu490; that span reads IGS. A 5-methyltetrahydropteroyltri-L-glutamate-binding site is contributed by Trp567. Asp605 contributes to the L-homocysteine binding site. L-methionine is bound at residue Asp605. Glu611 provides a ligand contact to 5-methyltetrahydropteroyltri-L-glutamate. Zn(2+) is bound by residues His647, Cys649, and Glu671. The active-site Proton donor is the His700. Cys732 serves as a coordination point for Zn(2+).

Belongs to the vitamin-B12 independent methionine synthase family. Zn(2+) serves as cofactor.

It carries out the reaction 5-methyltetrahydropteroyltri-L-glutamate + L-homocysteine = tetrahydropteroyltri-L-glutamate + L-methionine. Its pathway is amino-acid biosynthesis; L-methionine biosynthesis via de novo pathway; L-methionine from L-homocysteine (MetE route): step 1/1. In terms of biological role, catalyzes the transfer of a methyl group from 5-methyltetrahydrofolate to homocysteine resulting in methionine formation. In Listeria monocytogenes serotype 4b (strain F2365), this protein is 5-methyltetrahydropteroyltriglutamate--homocysteine methyltransferase.